Reading from the N-terminus, the 131-residue chain is uncharacterized protein (131 aa).

The next 3 membrane-spanning stretches (helical) occupy residues 13–35 (RFIK…TFPI), 60–79 (LVAL…TYVC), and 100–119 (LFEI…WNIT).

The protein localises to the membrane. This is an uncharacterized protein from Saccharomyces cerevisiae (strain ATCC 204508 / S288c) (Baker's yeast).